The sequence spans 443 residues: Sensor histidine protein kinase HK06 (443 aa).

A run of 2 helical transmembrane segments spans residues 16 to 36 (FAIL…TFPF) and 140 to 160 (ILLL…FVFS). An HAMP domain is found at 165-217 (KRLLNPLFYISEVTSKMQDLDDNIRFDESRKDEVGEVGKQINGMYEHLLKVIH). Residues 239–443 (GASHELKTPL…EHGMEFKISL (205 aa)) enclose the Histidine kinase domain. H242 is modified (phosphohistidine; by autocatalysis).

The protein localises to the cell membrane. The catalysed reaction is ATP + protein L-histidine = ADP + protein N-phospho-L-histidine.. Functionally, member of the two-component regulatory system HK06/RR06 involved in regulation of target genes, including choline-binding protein CbpA. Has been shown in one study to not be required for regulation of expression of choline-binding protein CbpA. This Streptococcus pneumoniae serotype 2 (strain D39 / NCTC 7466) protein is Sensor histidine protein kinase HK06.